The primary structure comprises 327 residues: Melanoma-associated antigen B18 (327 aa).

Residues Met-1–Arg-19 are compositionally biased toward basic residues. Residues Met-1–Asp-85 form a disordered region. The span at Met-46–Gln-70 shows a compositional bias: polar residues. One can recognise an MAGE domain in the interval Ile-91–Ala-289.

Interacts with LNX1. As to expression, expressed in testis, stomach, large intestine, small intestine, spleen, lymph node, bone marrow lymphocytes and blood T-lymphocytes. Not detected in brain, heart, lung, liver or kidney (at protein level).

Its subcellular location is the cytoplasm. Its function is as follows. May enhance ubiquitin ligase activity of RING-type zinc finger-containing E3 ubiquitin-protein ligases. Proposed to act through recruitment and/or stabilization of the Ubl-conjugating enzyme (E2) at the E3:substrate complex. This Mus musculus (Mouse) protein is Melanoma-associated antigen B18.